The following is an 881-amino-acid chain: Alanine--tRNA ligase (881 aa).

The span at 422–440 shows a compositional bias: basic and acidic residues; that stretch reads FEDEMQKQKERARSARSTE. The disordered stretch occupies residues 422-445; sequence FEDEMQKQKERARSARSTEKSMGV. 4 residues coordinate Zn(2+): histidine 567, histidine 571, cysteine 669, and histidine 673.

Belongs to the class-II aminoacyl-tRNA synthetase family. It depends on Zn(2+) as a cofactor.

The protein localises to the cytoplasm. The enzyme catalyses tRNA(Ala) + L-alanine + ATP = L-alanyl-tRNA(Ala) + AMP + diphosphate. Functionally, catalyzes the attachment of alanine to tRNA(Ala) in a two-step reaction: alanine is first activated by ATP to form Ala-AMP and then transferred to the acceptor end of tRNA(Ala). Also edits incorrectly charged Ser-tRNA(Ala) and Gly-tRNA(Ala) via its editing domain. In Pediococcus pentosaceus (strain ATCC 25745 / CCUG 21536 / LMG 10740 / 183-1w), this protein is Alanine--tRNA ligase.